Consider the following 688-residue polypeptide: Eukaryotic translation initiation factor 3 subunit B (688 aa).

The segment at 1–28 (MAKKKGDQYDSDGAEDQDYDEEPVFEDP) is disordered. The segment covering 9–25 (YDSDGAEDQDYDEEPVF) has biased composition (acidic residues). Residues 57–141 (NVIVVDNIPV…HTLLVNLFSD (85 aa)) form the RRM domain. WD repeat units follow at residues 208–246 (RERFTETYVKWSPLGTYIVTFHKQGVVIWGGSSFTKINK), 247–287 (FAHS…EKRS), 291–329 (DGSSNMSMFRWSHDDKYVARMGDNAIHVYETNTFYLLDK), 332–367 (IKVQGIRNFSWSPTDNIIAYWMSEDIDAPARVTLLE), 440–482 (EVKE…EPTM), and 527–572 (GDHY…KRVN). Residues 612–643 (DRVRMTRASKELLEKRAKLREQFVEYRAKRVN) adopt a coiled-coil conformation.

This sequence belongs to the eIF-3 subunit B family. Component of the eukaryotic translation initiation factor 3 (eIF-3) complex.

The protein localises to the cytoplasm. Its function is as follows. RNA-binding component of the eukaryotic translation initiation factor 3 (eIF-3) complex, which is involved in protein synthesis of a specialized repertoire of mRNAs and, together with other initiation factors, stimulates binding of mRNA and methionyl-tRNAi to the 40S ribosome. The eIF-3 complex specifically targets and initiates translation of a subset of mRNAs involved in cell proliferation. This chain is Eukaryotic translation initiation factor 3 subunit B, found in Culex quinquefasciatus (Southern house mosquito).